The chain runs to 1035 residues: FERM domain-containing protein 4B (1035 aa).

The 303-residue stretch at 59 to 361 (RHCQVHLLDD…SQHQFYLDRK (303 aa)) folds into the FERM domain. S372 carries the post-translational modification Phosphoserine. 2 coiled-coil regions span residues 414–451 (QDSE…LKKI) and 535–559 (KQDY…RIRC). A necessary for adherens junction and tight junction localization region spans residues 542-972 (VKRLQEIENS…TQLTIGLSEY (431 aa)). 4 disordered regions span residues 563–615 (PSQK…ILPP), 631–699 (NEQF…LESQ), 713–738 (FTLS…SQSS), and 754–798 (TQTL…SKGQ). The span at 571-590 (PPEDIIPSESSSLSDTTTYD) shows a compositional bias: low complexity. A compositionally biased stretch (polar residues) spans 594-607 (DSFTLAGQRPSSVP). At S609 the chain carries Phosphoserine. Residues 635–644 (MDTRHSREML) are compositionally biased toward basic and acidic residues. Polar residues-rich tracts occupy residues 664–699 (MPTT…LESQ) and 715–725 (LSKSQRSSSTE). At S698 the chain carries Phosphoserine. Residues 762-771 (RGRRRSKKHS) show a composition bias toward basic residues. Positions 772–782 (VSTSNSGSMPN) are enriched in polar residues. K883 is covalently cross-linked (Glycyl lysine isopeptide (Lys-Gly) (interchain with G-Cter in SUMO2)). Disordered stretches follow at residues 906–926 (RASG…SDRG), 939–958 (PCSP…TNAS), and 994–1035 (PSRQ…GTLV). Positions 907 to 921 (ASGQKDQGHSPQTSF) are enriched in polar residues. Position 916 is a phosphoserine (S916). Residues 941 to 958 (SPSSRASSYSSVSSTNAS) show a composition bias toward low complexity. Residues 1019-1035 (SEQRLFWHEDSKPGTLV) are compositionally biased toward basic and acidic residues. Residue K1030 forms a Glycyl lysine isopeptide (Lys-Gly) (interchain with G-Cter in SUMO2) linkage.

As to quaternary structure, interacts with CYTH3. Interacts with PARD3. Interacts with CYTH1. Isoform 1 is expressed in the brain. Isoform 2 is expressed in the lung (at protein level).

The protein localises to the cytoplasm. The protein resides in the cytoskeleton. It localises to the cell junction. Its subcellular location is the tight junction. It is found in the adherens junction. Its function is as follows. Member of GRP1 signaling complexes that are acutely recruited to plasma membrane ruffles in response to insulin receptor signaling. May function as a scaffolding protein that regulates epithelial cell polarity by connecting ARF6 activation with the PAR3 complex. Plays a redundant role with FRMD4A in epithelial polarization. This is FERM domain-containing protein 4B (Frmd4b) from Mus musculus (Mouse).